The following is a 717-amino-acid chain: Probable cyclic nucleotide-gated ion channel 5 (717 aa).

At 1–102 the chain is on the cytoplasmic side; the sequence is MAGKRENFVR…DKFLLYCNKL (102 aa). The chain crosses the membrane as a helical span at residues 103-123; sequence FVASCILSVFVDPFFFYLPVI. Over 124–136 the chain is Extracellular; that stretch reads NAESKCLGIDRKL. A helical membrane pass occupies residues 137–157; sequence AITASTLRTFIDVFYLAHMAL. Topologically, residues 158–190 are cytoplasmic; that stretch reads QLRTAYIAPSSRVFGRGELVIDPAQIAKRYLQR. The chain crosses the membrane as a helical span at residues 191 to 211; the sequence is WFIIDFLSVLPLPQIVVWRFL. Residues 212 to 224 are Extracellular-facing; the sequence is QSSNGSDVLATKQ. Residues 225–245 traverse the membrane as a helical segment; the sequence is ALLFIVLVQYIPRFLRVLPLT. Topologically, residues 246–265 are cytoplasmic; sequence SELKRTAGVFAETAWAGAAY. Residues 266 to 286 form a helical membrane-spanning segment; that stretch reads YLLLYMLASHIVGAFWYLLAL. Over 287 to 391 the chain is Extracellular; sequence ERNDACWQEA…GQGLETSTYP (105 aa). A helical membrane pass occupies residues 392 to 412; it reads MEIIFSISLAISGLILFALLI. Residues 413–717 lie on the Cytoplasmic side of the membrane; the sequence is GNMQTYLQSL…KPPEPDFTAD (305 aa). A nucleoside 3',5'-cyclic phosphate contacts are provided by residues 498 to 628 and E569; that span reads LFKS…TFRF. Positions 614 to 629 are calmodulin-binding; sequence FRRLHSRQVQHTFRFY. Positions 634–663 constitute an IQ domain; the sequence is RTWAACFIQAAWRRYCKRKKMEEAEAEAAA.

Belongs to the cyclic nucleotide-gated cation channel (TC 1.A.1.5) family. As to quaternary structure, homotetramer or heterotetramer.

It is found in the cell membrane. Its function is as follows. Probable cyclic nucleotide-gated ion channel. The polypeptide is Probable cyclic nucleotide-gated ion channel 5 (CNGC5) (Arabidopsis thaliana (Mouse-ear cress)).